The chain runs to 866 residues: Probable beta-glucosidase F (866 aa).

The N-terminal stretch at M1–S20 is a signal peptide. Residues N65, N73, and N257 are each glycosylated (N-linked (GlcNAc...) asparagine). Residue D285 is part of the active site. N-linked (GlcNAc...) asparagine glycosylation is found at N328, N360, N395, N421, N474, N659, N664, and N724. The tract at residues S725–A748 is disordered.

This sequence belongs to the glycosyl hydrolase 3 family.

Its subcellular location is the secreted. It catalyses the reaction Hydrolysis of terminal, non-reducing beta-D-glucosyl residues with release of beta-D-glucose.. The protein operates within glycan metabolism; cellulose degradation. Beta-glucosidases are one of a number of cellulolytic enzymes involved in the degradation of cellulosic biomass. Catalyzes the last step releasing glucose from the inhibitory cellobiose. The protein is Probable beta-glucosidase F (bglF) of Aspergillus oryzae (strain ATCC 42149 / RIB 40) (Yellow koji mold).